The primary structure comprises 437 residues: tRNA-2-methylthio-N(6)-dimethylallyladenosine synthase (437 aa).

The 117-residue stretch at 5 to 121 (KKLYIKTYGC…LPELTARAAT (117 aa)) folds into the MTTase N-terminal domain. [4Fe-4S] cluster contacts are provided by C14, C50, C84, C159, C163, and C166. The 227-residue stretch at 145–371 (AKRGPTAFLT…QALLTRQQRA (227 aa)) folds into the Radical SAM core domain. The TRAM domain occupies 374 to 436 (DAKVGTTARV…ANSLRGVLIA (63 aa)).

Belongs to the methylthiotransferase family. MiaB subfamily. Monomer. It depends on [4Fe-4S] cluster as a cofactor.

It is found in the cytoplasm. The catalysed reaction is N(6)-dimethylallyladenosine(37) in tRNA + (sulfur carrier)-SH + AH2 + 2 S-adenosyl-L-methionine = 2-methylsulfanyl-N(6)-dimethylallyladenosine(37) in tRNA + (sulfur carrier)-H + 5'-deoxyadenosine + L-methionine + A + S-adenosyl-L-homocysteine + 2 H(+). Catalyzes the methylthiolation of N6-(dimethylallyl)adenosine (i(6)A), leading to the formation of 2-methylthio-N6-(dimethylallyl)adenosine (ms(2)i(6)A) at position 37 in tRNAs that read codons beginning with uridine. In Dinoroseobacter shibae (strain DSM 16493 / NCIMB 14021 / DFL 12), this protein is tRNA-2-methylthio-N(6)-dimethylallyladenosine synthase.